We begin with the raw amino-acid sequence, 395 residues long: uncharacterized protein (395 aa).

12 helical membrane passes run 12–34 (LLAS…TIYL), 44–66 (LIGY…FGIL), 75–94 (YMLL…TLVN), 99–121 (VVLF…KAWF), 134–156 (FSIN…TLLV), 160–182 (INLP…QIWV), 208–230 (LLWF…SCIS), 245–264 (VVAV…QYSV), 271–293 (ANIR…GFIF), 298–320 (LLLW…PGEY), 341–360 (LGWL…LTSL), and 364–381 (SLFV…VLML).

This sequence belongs to the major facilitator superfamily.

The protein resides in the cell inner membrane. Functionally, a transporter able to export peptides. When overexpressed, allows cells deleted for multiple peptidases (pepA, pepB, pepD and pepN) to grow in the presence of dipeptides Ala-Gln or Gly-Tyr which otherwise inhibit growth. Cells overexpressing this protein have decreased intracellular levels of Ala-Gln dipeptide, and in a system that produces the Ala-Gln dipeptide overproduction of this protein increases export of the dipeptide. This is an uncharacterized protein from Escherichia coli (strain K12).